Consider the following 175-residue polypeptide: Outer membrane protein assembly factor BamE (175 aa).

Positions 1 to 21 are cleaved as a signal peptide; it reads MQNTKLLLTSFTFVGLLALAG. Cys-22 carries the N-palmitoyl cysteine lipid modification. The S-diacylglycerol cysteine moiety is linked to residue Cys-22. Disordered regions lie at residues 117 to 147 and 156 to 175; these read ALLG…KPGS and IDNV…TSPQ.

Belongs to the BamE family. In terms of assembly, part of the Bam complex.

The protein resides in the cell outer membrane. In terms of biological role, part of the outer membrane protein assembly complex, which is involved in assembly and insertion of beta-barrel proteins into the outer membrane. May have a structural role in maintaining the cell envelope integrity. The chain is Outer membrane protein assembly factor BamE from Pseudomonas fluorescens.